The following is a 1187-amino-acid chain: Myelin transcription factor 1-like protein (1187 aa).

Positions 1–20 (MDVDAEEKRHRTRSKGVRVP) are disordered. The CCHHC-type 1 zinc-finger motif lies at 22–65 (EPAIQELFSCPTPGCDGSGHVSGKYARHRSVYGCPLAKKRKTQD). Residues Cys31, Cys36, His49, and Cys55 each coordinate Zn(2+). 2 disordered regions span residues 56 to 178 (PLAK…QMSC) and 221 to 248 (RTES…GRKS). Residues 89 to 172 (ECYESDGTED…EEEEEEEENE (84 aa)) show a composition bias toward acidic residues. Residue Ser251 is modified to Phosphoserine. Disordered stretches follow at residues 343–422 (SETN…DRSE) and 450–509 (REKM…PTPG). Over residues 344–358 (ETNPQDRSQPPNMSV) the composition is skewed to polar residues. Basic and acidic residues-rich tracts occupy residues 362-377 (VRQE…DRSY), 401-412 (AKEDGCHERDDD), and 450-504 (REKM…RESK). 2 consecutive CCHHC-type zinc fingers follow at residues 496 to 539 (SRTE…PPEI) and 540 to 583 (LAMH…KLAK). The Zn(2+) site is built by Cys505, Cys510, His523, Cys529, Cys549, Cys554, His567, and Cys573. Positions 684–708 (ASPSSSTTSSYAPSSSSNLSCGGGS) are disordered. CCHHC-type zinc fingers lie at residues 895–938 (LATS…GIRI), 944–987 (DKED…QKDG), and 997–1040 (KSVK…MKKA). 12 residues coordinate Zn(2+): Cys904, Cys909, His922, Cys928, Cys953, Cys958, His971, Cys977, Cys1006, Cys1011, His1024, and Cys1030. The stretch at 1055–1131 (SNGIENDEEI…LANLSQSLIH (77 aa)) forms a coiled coil.

It belongs to the MYT1 family. In terms of assembly, interacts with SIN3B. As to expression, brain, testis and pituitary gland. Expression is higher in the brain than in the testis and pituitary gland. Highest level expression seen in the developing CNS.

The protein localises to the nucleus. It is found in the chromosome. Its function is as follows. Transcription factor that plays a key role in neuronal differentiation. Acts by specifically repressing expression of non-neuronal genes during neuron differentiation. In contrast to other transcription repressors that inhibit specific lineages, mediates repression of multiple differentiation programs. Also represses expression of negative regulators of neurogenesis, such as members of the Notch signaling pathway, including HES1. The combination of three transcription factors, ASCL1, POU3F2/BRN2 and MYT1L, is sufficient to reprogram fibroblasts and other somatic cells into induced neuronal (iN) cells in vitro. Directly binds the 5'-AAGTT-3' core motif present on the promoter of target genes and represses transcription by recruiting a multiprotein complex containing SIN3B. The 5'-AAGTT-3' core motif is absent from the promoter of neural genes. This chain is Myelin transcription factor 1-like protein (Myt1l), found in Rattus norvegicus (Rat).